We begin with the raw amino-acid sequence, 415 residues long: Histidine--tRNA ligase (415 aa).

It belongs to the class-II aminoacyl-tRNA synthetase family. As to quaternary structure, homodimer.

The protein resides in the cytoplasm. The catalysed reaction is tRNA(His) + L-histidine + ATP = L-histidyl-tRNA(His) + AMP + diphosphate + H(+). This chain is Histidine--tRNA ligase, found in Clostridium botulinum (strain Loch Maree / Type A3).